A 732-amino-acid polypeptide reads, in one-letter code: DNA gyrase subunit B, mitochondrial (732 aa).

The Toprim domain occupies 513–620 (SEIFIVEGDS…RYQRALFDAG (108 aa)). Residues glutamate 519, aspartate 593, and aspartate 595 each contribute to the Mg(2+) site.

This sequence belongs to the type II topoisomerase GyrB family. As to quaternary structure, made up of two chains. The A chain is responsible for DNA breakage and rejoining; the B chain catalyzes ATP hydrolysis. Mg(2+) serves as cofactor. Requires Mn(2+) as cofactor. The cofactor is Ca(2+).

The protein localises to the mitochondrion. It catalyses the reaction ATP-dependent breakage, passage and rejoining of double-stranded DNA.. In terms of biological role, a type II topoisomerase that negatively supercoils closed circular double-stranded DNA in an ATP-dependent manner. The protein is DNA gyrase subunit B, mitochondrial (GYRBM) of Arabidopsis thaliana (Mouse-ear cress).